The chain runs to 390 residues: tRNA (guanine(9)-N1)-methyltransferase (390 aa).

The disordered stretch occupies residues 1 to 72; that stretch reads MDIDEESYLN…RTAQLAEGYA (72 aa). The segment covering 43–59 has biased composition (basic and acidic residues); sequence ARLEEIKPLKRAAERER. Positions 92-340 constitute an SAM-dependent MTase TRM10-type domain; the sequence is KERKEAQRRI…AVIPIRKYAP (249 aa). Residues 246-247, Gly-266, 270-274, Cys-278, Leu-292, and 305-307 each bind S-adenosyl-L-methionine; these read LS, DRNRH, and KVL. Asp-270 serves as the catalytic Proton acceptor. Positions 343-390 are disordered; it reads KTKRAKTETKRNEKEEEEVECTSAEGEEDIGVIEESAEVDPEDVFSNQ. Positions 347 to 356 are enriched in basic and acidic residues; sequence AKTETKRNEK. Residues 357–390 show a composition bias toward acidic residues; it reads EEEEVECTSAEGEEDIGVIEESAEVDPEDVFSNQ.

The protein belongs to the class IV-like SAM-binding methyltransferase superfamily. TRM10 family. In terms of assembly, monomer.

The protein resides in the cytoplasm. Its subcellular location is the nucleus. The catalysed reaction is guanosine(9) in tRNA + S-adenosyl-L-methionine = N(1)-methylguanosine(9) in tRNA + S-adenosyl-L-homocysteine + H(+). Functionally, S-adenosyl-L-methionine-dependent guanine N(1)-methyltransferase that catalyzes the formation of N(1)-methylguanine at position 9 (m1G9) in cytoplasmic tRNA. The polypeptide is tRNA (guanine(9)-N1)-methyltransferase (Cryptococcus neoformans var. neoformans serotype D (strain JEC21 / ATCC MYA-565) (Filobasidiella neoformans)).